The sequence spans 216 residues: Transmembrane emp24 domain-containing protein eca (216 aa).

The first 20 residues, 1–20 (MRDQFISLALILCVLHSACG), serve as a signal peptide directing secretion. The Lumenal segment spans residues 21–182 (LYFHISETER…FRHTSESTNS (162 aa)). In terms of domain architecture, GOLD spans 30–126 (RKCFIEEVPD…QLRVHLDIQV (97 aa)). Positions 134-164 (ANVAQKEKLTELQLRIRQLLDQVEQITKEQN) form a coiled coil. The helical transmembrane segment at 183–203 (RVLWWSLAQTIVLVCMGFWQM) threads the bilayer. Over 204 to 216 (RHLKSFFEAKKLV) the chain is Cytoplasmic. A Prevents secretion from ER motif is present at residues 213–216 (KKLV).

Belongs to the EMP24/GP25L family.

The protein resides in the endoplasmic reticulum membrane. Functionally, eca and bai are essential, though not redundant, for dorsoventral patterning of the embryo. Specifically required during early embryogenesis for the activity of maternal tkv, while the zygotic tkv is not affected. Involved in Golgi organization. This is Transmembrane emp24 domain-containing protein eca from Drosophila sechellia (Fruit fly).